The chain runs to 487 residues: Betaine aldehyde dehydrogenase (487 aa).

Positions 26 and 93 each coordinate K(+). 150 to 152 is a binding site for NAD(+); it reads GAW. K162 (charge relay system) is an active-site residue. NAD(+)-binding positions include 176-179 and 229-232; these read KPSE and SVPT. Residue L244 participates in K(+) binding. Residue E250 is the Proton acceptor of the active site. Positions 252, 284, and 384 each coordinate NAD(+). The active-site Nucleophile is C284. The residue at position 284 (C284) is a Cysteine sulfenic acid (-SOH). Positions 454 and 457 each coordinate K(+). E461 serves as the catalytic Charge relay system.

Belongs to the aldehyde dehydrogenase family. In terms of assembly, dimer of dimers. It depends on K(+) as a cofactor.

The catalysed reaction is betaine aldehyde + NAD(+) + H2O = glycine betaine + NADH + 2 H(+). It participates in amine and polyamine biosynthesis; betaine biosynthesis via choline pathway; betaine from betaine aldehyde: step 1/1. Functionally, involved in the biosynthesis of the osmoprotectant glycine betaine. Catalyzes the irreversible oxidation of betaine aldehyde to the corresponding acid. The chain is Betaine aldehyde dehydrogenase from Rhizobium etli (strain ATCC 51251 / DSM 11541 / JCM 21823 / NBRC 15573 / CFN 42).